A 396-amino-acid polypeptide reads, in one-letter code: Chalcone synthase B (396 aa).

Residue Cys170 is part of the active site.

This sequence belongs to the thiolase-like superfamily. Chalcone/stilbene synthases family.

It carries out the reaction (E)-4-coumaroyl-CoA + 3 malonyl-CoA + 3 H(+) = 2',4,4',6'-tetrahydroxychalcone + 3 CO2 + 4 CoA. It participates in secondary metabolite biosynthesis; flavonoid biosynthesis. The primary product of this enzyme is 4,2',4',6'-tetrahydroxychalcone (also termed naringenin-chalcone or chalcone) which can under specific conditions spontaneously isomerize into naringenin. This is Chalcone synthase B (CHSB) from Ipomoea purpurea (Common morning glory).